Consider the following 271-residue polypeptide: Putative phosphoenolpyruvate synthase regulatory protein (271 aa).

151 to 158 (GVSRSGKT) serves as a coordination point for ADP.

The protein belongs to the pyruvate, phosphate/water dikinase regulatory protein family. PSRP subfamily.

The enzyme catalyses [pyruvate, water dikinase] + ADP = [pyruvate, water dikinase]-phosphate + AMP + H(+). It carries out the reaction [pyruvate, water dikinase]-phosphate + phosphate + H(+) = [pyruvate, water dikinase] + diphosphate. Functionally, bifunctional serine/threonine kinase and phosphorylase involved in the regulation of the phosphoenolpyruvate synthase (PEPS) by catalyzing its phosphorylation/dephosphorylation. The chain is Putative phosphoenolpyruvate synthase regulatory protein from Paraburkholderia xenovorans (strain LB400).